A 234-amino-acid polypeptide reads, in one-letter code: Thymidylate kinase (234 aa).

21–28 is an ATP binding site; it reads GGEGTGKS.

It belongs to the thymidylate kinase family.

It carries out the reaction dTMP + ATP = dTDP + ADP. Its function is as follows. Phosphorylation of dTMP to form dTDP in both de novo and salvage pathways of dTTP synthesis. The chain is Thymidylate kinase from Rhizobium meliloti (strain 1021) (Ensifer meliloti).